Here is a 143-residue protein sequence, read N- to C-terminus: Hemoglobin subunit alpha-2 (143 aa).

Ser-2 carries the N-acetylserine modification. The 142-residue stretch at 2–143 folds into the Globin domain; sequence SLSTKDKDTV…LARALSEKYR (142 aa). 2 residues coordinate heme b: His-60 and His-89.

This sequence belongs to the globin family. As to quaternary structure, hb 2 is a heterotetramer of two alpha-2 and two beta chains. In terms of tissue distribution, red blood cells.

Its function is as follows. Involved in oxygen transport from gills to the various peripheral tissues. The protein is Hemoglobin subunit alpha-2 of Cottoperca gobio (Frogmouth).